A 67-amino-acid polypeptide reads, in one-letter code: UPF0337 protein BCE_3655 (67 aa).

This sequence belongs to the UPF0337 (CsbD) family.

The protein is UPF0337 protein BCE_3655 of Bacillus cereus (strain ATCC 10987 / NRS 248).